The primary structure comprises 386 residues: Methylthioribose-1-phosphate isomerase (386 aa).

The active-site Proton donor is Asp261.

This sequence belongs to the eIF-2B alpha/beta/delta subunits family. MtnA subfamily.

It localises to the cytoplasm. The protein resides in the nucleus. The enzyme catalyses 5-(methylsulfanyl)-alpha-D-ribose 1-phosphate = 5-(methylsulfanyl)-D-ribulose 1-phosphate. It functions in the pathway amino-acid biosynthesis; L-methionine biosynthesis via salvage pathway; L-methionine from S-methyl-5-thio-alpha-D-ribose 1-phosphate: step 1/6. In terms of biological role, catalyzes the interconversion of methylthioribose-1-phosphate (MTR-1-P) into methylthioribulose-1-phosphate (MTRu-1-P). The polypeptide is Methylthioribose-1-phosphate isomerase (Paracoccidioides brasiliensis (strain Pb03)).